Here is a 189-residue protein sequence, read N- to C-terminus: Glycerol-3-phosphate acyltransferase (189 aa).

A run of 4 helical transmembrane segments spans residues 1-21, 79-99, 113-133, and 151-171; these read MVWL…AILL, QQAW…YFNF, LGLY…VFAF, and LLAW…GVIV.

This sequence belongs to the PlsY family. Probably interacts with PlsX.

It localises to the cell inner membrane. It carries out the reaction an acyl phosphate + sn-glycerol 3-phosphate = a 1-acyl-sn-glycero-3-phosphate + phosphate. Its pathway is lipid metabolism; phospholipid metabolism. In terms of biological role, catalyzes the transfer of an acyl group from acyl-phosphate (acyl-PO(4)) to glycerol-3-phosphate (G3P) to form lysophosphatidic acid (LPA). This enzyme utilizes acyl-phosphate as fatty acyl donor, but not acyl-CoA or acyl-ACP. The chain is Glycerol-3-phosphate acyltransferase from Azotobacter vinelandii (strain DJ / ATCC BAA-1303).